A 563-amino-acid chain; its full sequence is Methylcrotonoyl-CoA carboxylase beta chain, mitochondrial (563 aa).

Residues 1–22 (MWGALRSALRPCCRAAVPPQRA) constitute a mitochondrion transit peptide. The 258-residue stretch at 49–306 (MKALVSQLHE…QKKMDVTIEP (258 aa)) folds into the CoA carboxyltransferase N-terminal domain. Residues 49-555 (MKALVSQLHE…SAALNAPIQR (507 aa)) form a carboxyltransferase region. K70 carries the N6-acetyllysine; alternate modification. N6-succinyllysine; alternate is present on K70. K141 carries the N6-succinyllysine modification. The CoA carboxyltransferase C-terminal domain occupies 309–555 (EPLFPADELY…SAALNAPIQR (247 aa)). The segment at 343–372 (RFNEFKALYGDTLVTGFARIFGYPVGIIGN) is acyl-CoA binding. Residue K433 is modified to N6-succinyllysine. Position 495 is an N6-acetyllysine; alternate (K495). K495 carries the N6-succinyllysine; alternate modification. At K511 the chain carries N6-acetyllysine.

The protein belongs to the AccD/PCCB family. In terms of assembly, probably a dodecamer composed of six biotin-containing alpha subunits (MCCC1) and six beta (MCCC2) subunits.

The protein localises to the mitochondrion matrix. It carries out the reaction 3-methylbut-2-enoyl-CoA + hydrogencarbonate + ATP = 3-methyl-(2E)-glutaconyl-CoA + ADP + phosphate + H(+). Its pathway is amino-acid degradation; L-leucine degradation; (S)-3-hydroxy-3-methylglutaryl-CoA from 3-isovaleryl-CoA: step 2/3. Its function is as follows. Carboxyltransferase subunit of the 3-methylcrotonyl-CoA carboxylase, an enzyme that catalyzes the conversion of 3-methylcrotonyl-CoA to 3-methylglutaconyl-CoA, a critical step for leucine and isovaleric acid catabolism. The protein is Methylcrotonoyl-CoA carboxylase beta chain, mitochondrial (Mccc2) of Mus musculus (Mouse).